The sequence spans 336 residues: Protein-glutamate methylesterase/protein-glutamine glutaminase 3 (336 aa).

Residues 2–119 (KIAIVNDMPM…PNPREAAAPL (118 aa)) form the Response regulatory domain. Aspartate 53 is modified (4-aspartylphosphate). One can recognise a CheB-type methylesterase domain in the interval 147–336 (VSRRDRLVAI…APRLMEVFTQ (190 aa)). Catalysis depends on residues serine 159, histidine 186, and aspartate 279.

Belongs to the CheB family. In terms of processing, phosphorylated by CheA. Phosphorylation of the N-terminal regulatory domain activates the methylesterase activity.

It localises to the cytoplasm. The enzyme catalyses [protein]-L-glutamate 5-O-methyl ester + H2O = L-glutamyl-[protein] + methanol + H(+). The catalysed reaction is L-glutaminyl-[protein] + H2O = L-glutamyl-[protein] + NH4(+). Involved in chemotaxis. Part of a chemotaxis signal transduction system that modulates chemotaxis in response to various stimuli. Catalyzes the demethylation of specific methylglutamate residues introduced into the chemoreceptors (methyl-accepting chemotaxis proteins or MCP) by CheR. Also mediates the irreversible deamidation of specific glutamine residues to glutamic acid. This is Protein-glutamate methylesterase/protein-glutamine glutaminase 3 from Pseudomonas syringae pv. tomato (strain ATCC BAA-871 / DC3000).